An 879-amino-acid polypeptide reads, in one-letter code: Alanine--tRNA ligase (879 aa).

Zn(2+) contacts are provided by His566, His570, Cys668, and His672.

This sequence belongs to the class-II aminoacyl-tRNA synthetase family. The cofactor is Zn(2+).

It is found in the cytoplasm. The enzyme catalyses tRNA(Ala) + L-alanine + ATP = L-alanyl-tRNA(Ala) + AMP + diphosphate. Functionally, catalyzes the attachment of alanine to tRNA(Ala) in a two-step reaction: alanine is first activated by ATP to form Ala-AMP and then transferred to the acceptor end of tRNA(Ala). Also edits incorrectly charged Ser-tRNA(Ala) and Gly-tRNA(Ala) via its editing domain. The sequence is that of Alanine--tRNA ligase from Clostridium botulinum (strain Alaska E43 / Type E3).